Consider the following 286-residue polypeptide: Light-independent protochlorophyllide reductase iron-sulfur ATP-binding protein (286 aa).

ATP contacts are provided by residues glycine 10–threonine 15 and lysine 39. A Mg(2+)-binding site is contributed by serine 14. [4Fe-4S] cluster is bound by residues cysteine 95 and cysteine 129. Asparagine 180–arginine 181 is an ATP binding site.

It belongs to the NifH/BchL/ChlL family. As to quaternary structure, homodimer. Protochlorophyllide reductase is composed of three subunits; ChlL, ChlN and ChlB. [4Fe-4S] cluster is required as a cofactor.

It carries out the reaction chlorophyllide a + oxidized 2[4Fe-4S]-[ferredoxin] + 2 ADP + 2 phosphate = protochlorophyllide a + reduced 2[4Fe-4S]-[ferredoxin] + 2 ATP + 2 H2O. Its pathway is porphyrin-containing compound metabolism; chlorophyll biosynthesis (light-independent). Component of the dark-operative protochlorophyllide reductase (DPOR) that uses Mg-ATP and reduced ferredoxin to reduce ring D of protochlorophyllide (Pchlide) to form chlorophyllide a (Chlide). This reaction is light-independent. The L component serves as a unique electron donor to the NB-component of the complex, and binds Mg-ATP. The chain is Light-independent protochlorophyllide reductase iron-sulfur ATP-binding protein from Leptolyngbya boryana (Plectonema boryanum).